Reading from the N-terminus, the 329-residue chain is Tryptophan--tRNA ligase (329 aa).

Residues 9–11 and 17–18 contribute to the ATP site; these read QPS and GN. Residues 10 to 18 carry the 'HIGH' region motif; the sequence is PSGIPTIGN. D133 serves as a coordination point for L-tryptophan. ATP contacts are provided by residues 145–147, V184, and 193–197; these read GDD and KMSKS. A 'KMSKS' region motif is present at residues 193 to 197; it reads KMSKS.

The protein belongs to the class-I aminoacyl-tRNA synthetase family. As to quaternary structure, homodimer.

Its subcellular location is the cytoplasm. It carries out the reaction tRNA(Trp) + L-tryptophan + ATP = L-tryptophyl-tRNA(Trp) + AMP + diphosphate + H(+). Catalyzes the attachment of tryptophan to tRNA(Trp). In Staphylococcus aureus (strain MSSA476), this protein is Tryptophan--tRNA ligase.